A 480-amino-acid polypeptide reads, in one-letter code: NADH-quinone oxidoreductase subunit N (480 aa).

A run of 13 helical transmembrane segments spans residues 11–31 (VIPE…DLFV), 38–58 (ITYG…IALA), 74–94 (GLSD…FLYS), 109–129 (YVLG…YSFL), 163–183 (FILG…LYGI), 200–220 (GAGL…GLAF), 239–259 (PTSV…AIIM), 273–293 (WQGM…VVAI), 301–321 (MLAY…LAGT), 329–349 (LFYT…IILL), 372–392 (FAFI…TVGF), 405–425 (VEMI…AFYY), and 451–471 (VVLS…GLLM).

Belongs to the complex I subunit 2 family. As to quaternary structure, NDH-1 is composed of 14 different subunits. Subunits NuoA, H, J, K, L, M, N constitute the membrane sector of the complex.

Its subcellular location is the cell inner membrane. It carries out the reaction a quinone + NADH + 5 H(+)(in) = a quinol + NAD(+) + 4 H(+)(out). Functionally, NDH-1 shuttles electrons from NADH, via FMN and iron-sulfur (Fe-S) centers, to quinones in the respiratory chain. The immediate electron acceptor for the enzyme in this species is believed to be ubiquinone. Couples the redox reaction to proton translocation (for every two electrons transferred, four hydrogen ions are translocated across the cytoplasmic membrane), and thus conserves the redox energy in a proton gradient. In Thioalkalivibrio sulfidiphilus (strain HL-EbGR7), this protein is NADH-quinone oxidoreductase subunit N.